We begin with the raw amino-acid sequence, 513 residues long: Putative ADP-ribosyl glycohydrolase L444 (513 aa).

Positions 1–23 (MSDKIQSRESKTTKPTKTEKISD) are enriched in basic and acidic residues. Residues 1–33 (MSDKIQSRESKTTKPTKTEKISDKSGNLSQVKS) form a disordered region. A compositionally biased stretch (polar residues) spans 24 to 33 (KSGNLSQVKS).

It belongs to the ADP-ribosylglycohydrolase family.

This Acanthamoeba polyphaga mimivirus (APMV) protein is Putative ADP-ribosyl glycohydrolase L444.